The following is a 252-amino-acid chain: Imidazole glycerol phosphate synthase subunit HisF (252 aa).

Catalysis depends on residues Asp-11 and Asp-130.

Belongs to the HisA/HisF family. Heterodimer of HisH and HisF.

It is found in the cytoplasm. The enzyme catalyses 5-[(5-phospho-1-deoxy-D-ribulos-1-ylimino)methylamino]-1-(5-phospho-beta-D-ribosyl)imidazole-4-carboxamide + L-glutamine = D-erythro-1-(imidazol-4-yl)glycerol 3-phosphate + 5-amino-1-(5-phospho-beta-D-ribosyl)imidazole-4-carboxamide + L-glutamate + H(+). It participates in amino-acid biosynthesis; L-histidine biosynthesis; L-histidine from 5-phospho-alpha-D-ribose 1-diphosphate: step 5/9. IGPS catalyzes the conversion of PRFAR and glutamine to IGP, AICAR and glutamate. The HisF subunit catalyzes the cyclization activity that produces IGP and AICAR from PRFAR using the ammonia provided by the HisH subunit. In Bacillus anthracis (strain CDC 684 / NRRL 3495), this protein is Imidazole glycerol phosphate synthase subunit HisF.